A 124-amino-acid chain; its full sequence is UPF0102 protein Blon_1698/BLIJ_1758 (124 aa).

Belongs to the UPF0102 family.

The polypeptide is UPF0102 protein Blon_1698/BLIJ_1758 (Bifidobacterium longum subsp. infantis (strain ATCC 15697 / DSM 20088 / JCM 1222 / NCTC 11817 / S12)).